Reading from the N-terminus, the 440-residue chain is MRLSRYFLPILREVPKEAEIVSHRLMLRAGMIRQESAGIYAWLPFGLRVLNKVCNIIREEQNRSGAIEMLMPTIQSADLWRESGRYDDYGKEMLRIKDRHEREMLFGPTNEEMITEIVRAYVKSYKALPLNLYHIQWKFRDEVRPRFGVYRSREFLMKDAYSFDLDAAGARHSYNKMFVAYLRTFARMGLKAIPMVADTGPIGGNLSHEFIILASTGESEVFCHGDYLEMAPPSADVNFDDAAGLQSVFDRWTELYAATSEKHDEAAFAAIPEASRMAARGIEVGHIFYFGTKYSEPFGAKVLGADGAEHTIHMGSYGIGPSRLVAAMIEASHDDNGIIWPDAVAPFQVGILNLKAGDSTTGAACEKLYAELTAAGYDVLYDDTEERAGAKFATADLIGLPWQILVGPKGLADGKVELKRRVDGSRELIAPGDILERLKA.

The protein belongs to the class-II aminoacyl-tRNA synthetase family. ProS type 2 subfamily. As to quaternary structure, homodimer.

The protein resides in the cytoplasm. It carries out the reaction tRNA(Pro) + L-proline + ATP = L-prolyl-tRNA(Pro) + AMP + diphosphate. In terms of biological role, catalyzes the attachment of proline to tRNA(Pro) in a two-step reaction: proline is first activated by ATP to form Pro-AMP and then transferred to the acceptor end of tRNA(Pro). This is Proline--tRNA ligase from Xanthobacter autotrophicus (strain ATCC BAA-1158 / Py2).